The primary structure comprises 124 residues: Translation initiation factor 5A (124 aa).

Positions 27 to 53 (TSYSTSKPGKHGSAKARVEGTGVFDGQ) are disordered. A Hypusine modification is found at Lys36.

The protein belongs to the eIF-5A family.

The protein resides in the cytoplasm. Functions by promoting the formation of the first peptide bond. The sequence is that of Translation initiation factor 5A from Natronomonas pharaonis (strain ATCC 35678 / DSM 2160 / CIP 103997 / JCM 8858 / NBRC 14720 / NCIMB 2260 / Gabara) (Halobacterium pharaonis).